A 122-amino-acid chain; its full sequence is NADH-quinone oxidoreductase subunit A (122 aa).

3 helical membrane-spanning segments follow: residues 12 to 32 (IIIF…VNLI), 66 to 86 (LVAI…PWAI), and 91 to 111 (IGGL…VGFI).

This sequence belongs to the complex I subunit 3 family. NDH-1 is composed of 14 different subunits. Subunits NuoA, H, J, K, L, M, N constitute the membrane sector of the complex.

The protein resides in the cell inner membrane. The enzyme catalyses a quinone + NADH + 5 H(+)(in) = a quinol + NAD(+) + 4 H(+)(out). NDH-1 shuttles electrons from NADH, via FMN and iron-sulfur (Fe-S) centers, to quinones in the respiratory chain. The immediate electron acceptor for the enzyme in this species is believed to be ubiquinone. Couples the redox reaction to proton translocation (for every two electrons transferred, four hydrogen ions are translocated across the cytoplasmic membrane), and thus conserves the redox energy in a proton gradient. The sequence is that of NADH-quinone oxidoreductase subunit A from Pelagibacter ubique (strain HTCC1062).